The following is an 877-amino-acid chain: Leucine--tRNA ligase (877 aa).

A 'HIGH' region motif is present at residues 50–60; the sequence is PYPSGKLHMGH. Positions 634-638 match the 'KMSKS' region motif; it reads KMSKS. Residue K637 participates in ATP binding.

It belongs to the class-I aminoacyl-tRNA synthetase family.

The protein resides in the cytoplasm. It carries out the reaction tRNA(Leu) + L-leucine + ATP = L-leucyl-tRNA(Leu) + AMP + diphosphate. The chain is Leucine--tRNA ligase from Hydrogenovibrio crunogenus (strain DSM 25203 / XCL-2) (Thiomicrospira crunogena).